Reading from the N-terminus, the 202-residue chain is Endothelin-1 (202 aa).

Residues 1–25 (MDYFPVIFSLLFVTFQGAPETAVLG) form the signal peptide. Positions 26–50 (AELSTGAENGVQSPPPSTPWRPRRS) are excised as a propeptide. Intrachain disulfides connect cysteine 53–cysteine 67 and cysteine 55–cysteine 63. Residues 74 to 202 (VNTPERVVPY…DQKLTHNRAH (129 aa)) constitute a propeptide that is removed on maturation. The segment at 110–124 (CQCAHQKDKKCWNFC) is endothelin-like.

Belongs to the endothelin/sarafotoxin family. As to expression, highest expression in the adult is in lung. Lower levels found in heart, kidney, brain and intestine. In the embryo, expressed in outer and inner pharyngeal arch surfaces. Also expressed in endothelium of dorsal aorta and arch arteries, and in epithelium of pharyngeal pouches.

It is found in the secreted. In terms of biological role, endothelins are endothelium-derived vasoconstrictor peptides. Probable ligand for G-protein coupled receptors EDNRA and EDNRB which activates PTK2B, BCAR1, BCAR3 and, GTPases RAP1 and RHOA cascade in glomerular mesangial cells. Also binds the DEAR/FBXW7-AS1 receptor. Promotes mesenteric arterial wall remodeling via activation of ROCK signaling and subsequent colocalization of NFATC3 with F-actin filaments. NFATC3 then translocates to the nucleus where it subsequently promotes the transcription of the smooth muscle hypertrophy and differentiation marker ACTA2. The protein is Endothelin-1 (Edn1) of Mus musculus (Mouse).